Consider the following 698-residue polypeptide: Na(+)/H(+) antiporter NhaS5 (698 aa).

The next 12 helical transmembrane spans lie at 10-30 (SNPL…PPIF), 35-55 (LPGL…GLGV), 65-85 (LFTD…IDMV), 100-120 (LTFA…GYSF), 121-141 (NASV…YPIV), 156-176 (IGAT…CISI), 184-204 (AGLV…LIGF), 222-242 (QFLF…LINV), 275-295 (LFIP…AFLV), 300-320 (LFPL…VAAI), 333-353 (GLTM…AAVA), and 370-390 (VLNT…LMTA).

This sequence belongs to the monovalent cation:proton antiporter 2 (CPA2) transporter (TC 2.A.37) family.

The protein resides in the membrane. Its function is as follows. Na(+)/H(+) antiporter. The polypeptide is Na(+)/H(+) antiporter NhaS5 (nhaS5) (Synechocystis sp. (strain ATCC 27184 / PCC 6803 / Kazusa)).